The following is an 86-amino-acid chain: Large ribosomal subunit protein bL27 (86 aa).

The tract at residues 1 to 26 is disordered; sequence MATKKAGGSSRNGRDSAGRRLGVKQS.

The protein belongs to the bacterial ribosomal protein bL27 family.

The chain is Large ribosomal subunit protein bL27 from Rickettsia canadensis (strain McKiel).